The chain runs to 155 residues: Biotin carboxyl carrier protein of acetyl-CoA carboxylase (155 aa).

Positions 72–155 constitute a Biotinyl-binding domain; sequence AASDELSGHL…EFDEPLIVIE (84 aa). At Lys-121 the chain carries N6-biotinyllysine.

Homodimer.

It participates in lipid metabolism; fatty acid biosynthesis. Its function is as follows. This protein is a component of the acetyl coenzyme A carboxylase complex; first, biotin carboxylase catalyzes the carboxylation of the carrier protein and then the transcarboxylase transfers the carboxyl group to form malonyl-CoA. This Haemophilus influenzae (strain ATCC 51907 / DSM 11121 / KW20 / Rd) protein is Biotin carboxyl carrier protein of acetyl-CoA carboxylase (accB).